Reading from the N-terminus, the 306-residue chain is tRNA (guanine-N(1)-)-methyltransferase (306 aa).

Residues glycine 157 and 182–187 each bind S-adenosyl-L-methionine; that span reads IGDYVL.

This sequence belongs to the RNA methyltransferase TrmD family. Homodimer.

It localises to the cytoplasm. The enzyme catalyses guanosine(37) in tRNA + S-adenosyl-L-methionine = N(1)-methylguanosine(37) in tRNA + S-adenosyl-L-homocysteine + H(+). Its function is as follows. Specifically methylates guanosine-37 in various tRNAs. This Bifidobacterium adolescentis (strain ATCC 15703 / DSM 20083 / NCTC 11814 / E194a) protein is tRNA (guanine-N(1)-)-methyltransferase.